The primary structure comprises 139 residues: Nucleoside diphosphate kinase (139 aa).

Positions 11, 59, 87, 93, 104, and 114 each coordinate ATP. Residue histidine 117 is the Pros-phosphohistidine intermediate of the active site.

The protein belongs to the NDK family. In terms of assembly, homotetramer. The cofactor is Mg(2+).

It localises to the cytoplasm. It carries out the reaction a 2'-deoxyribonucleoside 5'-diphosphate + ATP = a 2'-deoxyribonucleoside 5'-triphosphate + ADP. It catalyses the reaction a ribonucleoside 5'-diphosphate + ATP = a ribonucleoside 5'-triphosphate + ADP. Its function is as follows. Major role in the synthesis of nucleoside triphosphates other than ATP. The ATP gamma phosphate is transferred to the NDP beta phosphate via a ping-pong mechanism, using a phosphorylated active-site intermediate. The chain is Nucleoside diphosphate kinase from Moorella thermoacetica (strain ATCC 39073 / JCM 9320).